A 33-amino-acid chain; its full sequence is Protamine-M6/M7 (33 aa).

Residues 1–33 form a disordered region; sequence PRRRRETSRPIRRRRRARRAPIRRRRRVVRRRR.

In terms of tissue distribution, testis.

The protein localises to the nucleus. Its subcellular location is the chromosome. Protamines substitute for histones in the chromatin of sperm during the haploid phase of spermatogenesis. They compact sperm DNA into a highly condensed, stable and inactive complex. The polypeptide is Protamine-M6/M7 (Mugil cephalus (Flathead mullet)).